A 433-amino-acid polypeptide reads, in one-letter code: Legumain (433 aa).

The first 17 residues, 1–17, serve as a signal peptide directing secretion; sequence MVWKVAVFLSVALGIGA. Asn-91 is a glycosylation site (N-linked (GlcNAc...) asparagine). His-148 is an active-site residue. Asn-167 carries an N-linked (GlcNAc...) asparagine glycan. Cys-189 serves as the catalytic Nucleophile. Residues Asn-263 and Asn-272 are each glycosylated (N-linked (GlcNAc...) asparagine). Residues 324-433 constitute a propeptide that is removed on maturation; it reads DLEESRQLTE…SMDHVCLGHY (110 aa). Disulfide bonds link Cys-378–Cys-412 and Cys-390–Cys-429.

It belongs to the peptidase C13 family. In terms of assembly, homodimer before autocatalytic removal of the propeptide. Monomer after autocatalytic processing. May interact with integrins. Activated by autocatalytic processing at pH 4. Ubiquitous. Particularly abundant in kidney, heart and placenta.

It localises to the lysosome. It catalyses the reaction Hydrolysis of proteins and small molecule substrates at -Asn-|-Xaa- bonds.. Inhibited by CST6. In terms of biological role, has a strict specificity for hydrolysis of asparaginyl bonds. Can also cleave aspartyl bonds slowly, especially under acidic conditions. Involved in the processing of proteins for MHC class II antigen presentation in the lysosomal/endosomal system. Also involved in MHC class I antigen presentation in cross-presenting dendritic cells by mediating cleavage and maturation of Perforin-2 (MPEG1), thereby promoting antigen translocation in the cytosol. Required for normal lysosomal protein degradation in renal proximal tubules. Required for normal degradation of internalized EGFR. Plays a role in the regulation of cell proliferation via its role in EGFR degradation. In Homo sapiens (Human), this protein is Legumain.